The primary structure comprises 232 residues: ATP synthase subunit a (232 aa).

6 helical membrane-spanning segments follow: residues 18 to 38 (LLFI…IAFI), 74 to 94 (WAGL…LGLF), 107 to 127 (TYSL…YLAF), 142 to 162 (ALIP…PIAL), 173 to 193 (GHLL…SLMV), and 195 to 215 (SIPI…VACI).

This sequence belongs to the ATPase A chain family. In terms of assembly, F-type ATPases have 2 components, CF(1) - the catalytic core - and CF(0) - the membrane proton channel. CF(1) has five subunits: alpha(3), beta(3), gamma(1), delta(1), epsilon(1). CF(0) has three main subunits: a, b and c.

It localises to the mitochondrion inner membrane. Its function is as follows. Mitochondrial membrane ATP synthase (F(1)F(0) ATP synthase or Complex V) produces ATP from ADP in the presence of a proton gradient across the membrane which is generated by electron transport complexes of the respiratory chain. F-type ATPases consist of two structural domains, F(1) - containing the extramembraneous catalytic core and F(0) - containing the membrane proton channel, linked together by a central stalk and a peripheral stalk. During catalysis, ATP synthesis in the catalytic domain of F(1) is coupled via a rotary mechanism of the central stalk subunits to proton translocation. Key component of the proton channel; it may play a direct role in the translocation of protons across the membrane. The polypeptide is ATP synthase subunit a (ATP6) (Paracentrotus lividus (Common sea urchin)).